The primary structure comprises 860 residues: Leucine--tRNA ligase (860 aa).

Residues 42 to 52 (PYPSGRLHMGH) carry the 'HIGH' region motif. Residues 619–623 (KMSKS) carry the 'KMSKS' region motif. An ATP-binding site is contributed by lysine 622.

This sequence belongs to the class-I aminoacyl-tRNA synthetase family.

Its subcellular location is the cytoplasm. It carries out the reaction tRNA(Leu) + L-leucine + ATP = L-leucyl-tRNA(Leu) + AMP + diphosphate. This is Leucine--tRNA ligase from Salmonella choleraesuis (strain SC-B67).